The primary structure comprises 114 residues: Ribonuclease P protein component (114 aa).

Belongs to the RnpA family. As to quaternary structure, consists of a catalytic RNA component (M1 or rnpB) and a protein subunit.

It carries out the reaction Endonucleolytic cleavage of RNA, removing 5'-extranucleotides from tRNA precursor.. Its function is as follows. RNaseP catalyzes the removal of the 5'-leader sequence from pre-tRNA to produce the mature 5'-terminus. It can also cleave other RNA substrates such as 4.5S RNA. The protein component plays an auxiliary but essential role in vivo by binding to the 5'-leader sequence and broadening the substrate specificity of the ribozyme. The sequence is that of Ribonuclease P protein component from Borrelia turicatae (strain 91E135).